A 146-amino-acid chain; its full sequence is Large ribosomal subunit protein uL15 (146 aa).

The interval 1–55 (MGLRLNELSPGVGAKKTAQRRGRGIGSGLGKTGGRGVKGQKSRSGSSIRSGFEGG) is disordered. The span at 24-37 (GIGSGLGKTGGRGV) shows a compositional bias: gly residues.

Belongs to the universal ribosomal protein uL15 family. Part of the 50S ribosomal subunit.

Binds to the 23S rRNA. This is Large ribosomal subunit protein uL15 from Psychrobacter cryohalolentis (strain ATCC BAA-1226 / DSM 17306 / VKM B-2378 / K5).